The primary structure comprises 179 residues: Protein GrpE (179 aa).

A disordered region spans residues 1–23; sequence MSEEIKEQNVQDAQNENLAPDSV.

This sequence belongs to the GrpE family. As to quaternary structure, homodimer.

It is found in the cytoplasm. Its function is as follows. Participates actively in the response to hyperosmotic and heat shock by preventing the aggregation of stress-denatured proteins, in association with DnaK and GrpE. It is the nucleotide exchange factor for DnaK and may function as a thermosensor. Unfolded proteins bind initially to DnaJ; upon interaction with the DnaJ-bound protein, DnaK hydrolyzes its bound ATP, resulting in the formation of a stable complex. GrpE releases ADP from DnaK; ATP binding to DnaK triggers the release of the substrate protein, thus completing the reaction cycle. Several rounds of ATP-dependent interactions between DnaJ, DnaK and GrpE are required for fully efficient folding. The chain is Protein GrpE from Campylobacter curvus (strain 525.92).